A 142-amino-acid polypeptide reads, in one-letter code: Midkine-A (142 aa).

An N-terminal signal peptide occupies residues 1-20 (MELRAFCVILLITVLAVSSQ). Disulfide bonds link Cys-36–Cys-60, Cys-44–Cys-69, Cys-51–Cys-73, Cys-83–Cys-115, and Cys-93–Cys-125.

It belongs to the pleiotrophin family. As to expression, expression at the mid-gastrula stage begins in the neural anlage, and becomes increasingly prominent in the central nervous system and head mesenchyme during neurula stages. Although the mRNA is localized to the developing central nervous system (CNS), the protein is deposited at the neuromuscular junction (NMJ). In the tailbud stage embryo, expressed in the head and tail regions as well as in the CNS. In adults, expression is highest in the brain, eye and bone, with lower expression in the heart and lung. Not expressed in the ovary.

The protein localises to the secreted. Its function is as follows. Secreted protein that functions as a cytokine and growth factor and mediates its signal through cell-surface proteoglycan and non-proteoglycan receptors. Binds cell-surface proteoglycan receptors via their chondroitin sulfate (CS) groups. Thereby regulates many processes like inflammatory response, cell proliferation, cell adhesion, cell growth, cell survival, tissue regeneration, cell differentiation and cell migration. Inhibits mesoderm formation and promotes neural formation during development. Plays a role in development of the neuromuscular junction (NMJ). Has antibacterial activity against both Gram-positive and Gram-negative bacteria. The sequence is that of Midkine-A (mdk-a) from Xenopus laevis (African clawed frog).